The primary structure comprises 434 residues: D-amino acid dehydrogenase (434 aa).

3–17 contacts FAD; that stretch reads VLVLGSGVIGTTSAW.

It belongs to the DadA oxidoreductase family. Requires FAD as cofactor.

The enzyme catalyses a D-alpha-amino acid + A + H2O = a 2-oxocarboxylate + AH2 + NH4(+). It participates in amino-acid degradation; D-alanine degradation; NH(3) and pyruvate from D-alanine: step 1/1. Oxidative deamination of D-amino acids. The sequence is that of D-amino acid dehydrogenase from Stenotrophomonas maltophilia (strain K279a).